Consider the following 356-residue polypeptide: Nucleotide-binding protein GDI1189/Gdia_1902 (356 aa).

Position 20–27 (20–27 (GLSGAGKS)) interacts with ATP. 65-68 (DSRT) is a binding site for GTP. Positions 285-313 (EPGGTCDSPGKPAHIEKGAAPTDVQSGGA) are disordered.

This sequence belongs to the RapZ-like family.

In terms of biological role, displays ATPase and GTPase activities. In Gluconacetobacter diazotrophicus (strain ATCC 49037 / DSM 5601 / CCUG 37298 / CIP 103539 / LMG 7603 / PAl5), this protein is Nucleotide-binding protein GDI1189/Gdia_1902.